Reading from the N-terminus, the 410-residue chain is LL-diaminopimelate aminotransferase (410 aa).

Y15 and G42 together coordinate substrate. Pyridoxal 5'-phosphate is bound by residues Y72, 108–109 (AK), Y132, N187, Y218, and 246–248 (SFS). Substrate-binding residues include K109, Y132, and N187. K249 is modified (N6-(pyridoxal phosphate)lysine). Pyridoxal 5'-phosphate contacts are provided by R257 and N292. Positions 292 and 388 each coordinate substrate.

Belongs to the class-I pyridoxal-phosphate-dependent aminotransferase family. LL-diaminopimelate aminotransferase subfamily. Homodimer. It depends on pyridoxal 5'-phosphate as a cofactor.

It catalyses the reaction (2S,6S)-2,6-diaminopimelate + 2-oxoglutarate = (S)-2,3,4,5-tetrahydrodipicolinate + L-glutamate + H2O + H(+). It functions in the pathway amino-acid biosynthesis; L-lysine biosynthesis via DAP pathway; LL-2,6-diaminopimelate from (S)-tetrahydrodipicolinate (aminotransferase route): step 1/1. In terms of biological role, involved in the synthesis of meso-diaminopimelate (m-DAP or DL-DAP), required for both lysine and peptidoglycan biosynthesis. Catalyzes the direct conversion of tetrahydrodipicolinate to LL-diaminopimelate. Can also use m-DAP instead of LL-DAP as the amino-group donor. The protein is LL-diaminopimelate aminotransferase of Acetivibrio thermocellus (strain ATCC 27405 / DSM 1237 / JCM 9322 / NBRC 103400 / NCIMB 10682 / NRRL B-4536 / VPI 7372) (Clostridium thermocellum).